The primary structure comprises 1486 residues: Chromosome partition protein MukB (1486 aa).

34–41 (GGNGAGKS) provides a ligand contact to ATP. Coiled coils occupy residues 326 to 418 (LEAD…QYNQ), 444 to 480 (LETFQAKELEATEKMLSLEQKMSMAQTAHSQFEQAYQ), and 509 to 603 (RHLA…RAPV). The tract at residues 666-783 (PGGSEDQRLN…EVPLFGRAAR (118 aa)) is flexible hinge. 3 coiled-coil regions span residues 835–923 (EAEI…AKLE), 977–1115 (EMLS…TAKA), and 1209–1266 (VEAI…QNVS).

The protein belongs to the SMC family. MukB subfamily. Homodimerization via its hinge domain. Binds to DNA via its C-terminal region. Interacts, and probably forms a ternary complex, with MukE and MukF via its C-terminal region. The complex formation is stimulated by calcium or magnesium. Interacts with tubulin-related protein FtsZ.

The protein resides in the cytoplasm. The protein localises to the nucleoid. Plays a central role in chromosome condensation, segregation and cell cycle progression. Functions as a homodimer, which is essential for chromosome partition. Involved in negative DNA supercoiling in vivo, and by this means organize and compact chromosomes. May achieve or facilitate chromosome segregation by condensation DNA from both sides of a centrally located replisome during cell division. This chain is Chromosome partition protein MukB, found in Escherichia coli O127:H6 (strain E2348/69 / EPEC).